The sequence spans 94 residues: Co-chaperonin GroES (94 aa).

Belongs to the GroES chaperonin family. Heptamer of 7 subunits arranged in a ring. Interacts with the chaperonin GroEL.

It localises to the cytoplasm. Functionally, together with the chaperonin GroEL, plays an essential role in assisting protein folding. The GroEL-GroES system forms a nano-cage that allows encapsulation of the non-native substrate proteins and provides a physical environment optimized to promote and accelerate protein folding. GroES binds to the apical surface of the GroEL ring, thereby capping the opening of the GroEL channel. This is Co-chaperonin GroES from Alkaliphilus metalliredigens (strain QYMF).